Consider the following 202-residue polypeptide: MIMKIYVVDNGGQWTHREWRVLRELGVETEIVPNDIESRKLDGLDGLVLSGGAPNIDEEMDKLGSIGEYIEDHDYPVFGICVGAQFIALHYGAQVVKAKHPEFGKTLVKISEPANVLAGLPENIIAWENHNDEIKNLTSDFVLTASSETCEVQAFYHKHKPLYAVQFHPEVEHTQFGREIFKNFIAICQQHKEKLINNVNNK.

Residues 4–194 (KIYVVDNGGQ…IAICQQHKEK (191 aa)) form the Glutamine amidotransferase type-1 domain. The active-site Nucleophile is the C81. Residues H168 and E170 contribute to the active site.

In terms of assembly, heterodimer composed of a glutamine amidotransferase subunit (A) and a GMP-binding subunit (B).

The catalysed reaction is XMP + L-glutamine + ATP + H2O = GMP + L-glutamate + AMP + diphosphate + 2 H(+). Its pathway is purine metabolism; GMP biosynthesis; GMP from XMP (L-Gln route): step 1/1. In terms of biological role, catalyzes the synthesis of GMP from XMP. The protein is GMP synthase [glutamine-hydrolyzing] subunit A of Thermoplasma volcanium (strain ATCC 51530 / DSM 4299 / JCM 9571 / NBRC 15438 / GSS1).